Here is a 229-residue protein sequence, read N- to C-terminus: Uracil-DNA glycosylase (229 aa).

Aspartate 64 acts as the Proton acceptor in catalysis.

The protein belongs to the uracil-DNA glycosylase (UDG) superfamily. UNG family.

The protein localises to the cytoplasm. It carries out the reaction Hydrolyzes single-stranded DNA or mismatched double-stranded DNA and polynucleotides, releasing free uracil.. In terms of biological role, excises uracil residues from the DNA which can arise as a result of misincorporation of dUMP residues by DNA polymerase or due to deamination of cytosine. The polypeptide is Uracil-DNA glycosylase (Escherichia coli O81 (strain ED1a)).